The sequence spans 206 residues: dCTP deaminase, dUMP-forming (206 aa).

DCTP is bound by residues 117–122 (RSSFGR), Asp135, 143–145 (TLE), Gln163, Tyr177, Lys184, and Gln188. The active-site Proton donor/acceptor is the Glu145.

Belongs to the dCTP deaminase family. In terms of assembly, homotrimer.

The catalysed reaction is dCTP + 2 H2O = dUMP + NH4(+) + diphosphate. The protein operates within pyrimidine metabolism; dUMP biosynthesis; dUMP from dCTP: step 1/1. Functionally, bifunctional enzyme that catalyzes both the deamination of dCTP to dUTP and the hydrolysis of dUTP to dUMP without releasing the toxic dUTP intermediate. This chain is dCTP deaminase, dUMP-forming, found in Methanococcus maripaludis (strain C5 / ATCC BAA-1333).